Here is a 165-residue protein sequence, read N- to C-terminus: MPVINTHQNIAAFLDMLAVSEGTANHPLTKNRGYDVIVTGLDGKPEIFTDYSDHPFAHGRPAKVFNRRGEKSTASGRYQQLYLFWPHYRKQLALPDFSPLSQDRLAIQLIRERGALDDIRAGRIERAISRCRNIWASLPGAGYGQREHSLEKLVTVWRTAGGVPA.

Glu21 is an active-site residue.

It belongs to the glycosyl hydrolase 24 family. Monomer.

Its subcellular location is the host cytoplasm. It carries out the reaction Endolytic cleavage of the (1-&gt;4)-beta-glycosidic linkage between N-acetylmuramic acid (MurNAc) and N-acetylglucosamine (GlcNAc) residues in peptidoglycan with concomitant formation of a 1,6-anhydrobond in the MurNAc residue.. Functionally, endolysin with transglycosylase activity that degrades host peptidoglycans and participates with the holin and spanin proteins in the sequential events which lead to the programmed host cell lysis releasing the mature viral particles. Once the holin has permeabilized the host cell membrane, the endolysin can reach the periplasm and break down the peptidoglycan layer. The chain is Endolysin (K) from Enterobacteriaceae (Bacteriophage P2).